Reading from the N-terminus, the 226-residue chain is Ribonuclease S-7 (226 aa).

The first 27 residues, 1–27 (MGITGMIYIVTMVFSLIVLILSSSTVG), serve as a signal peptide directing secretion. Residue Q36 coordinates RNA. Residues C42 and C49 are joined by a disulfide bond. H60 is a binding site for RNA. H60 functions as the Proton donor in the catalytic mechanism. Residues N74 and N77 are each glycosylated (N-linked (GlcNAc...) asparagine; alternate). A disulfide bridge connects residues C75 and C119. RNA-binding positions include 98-99 (NV), F108, 111-112 (KQ), and 115-116 (KH). The active site involves Q112. H116 (proton acceptor) is an active-site residue. 3 N-linked (GlcNAc...) asparagine glycosylation sites follow: N126, N144, and N172. 2 disulfide bridges follow: C183–C220 and C198–C209.

It belongs to the RNase T2 family. Post-translationally, the N-glycans attached at Asn-74 and Asn-77 consist of either monosaccharide (GlcNAc) or disaccharide (GlcNAc-GlcNAc) that could not be distinguished. The N-glycan at Asn-144 contains mannose and xylose, and at Asn-126 contains mannose, xylose and fucose. The N-glycan at Asn-172 consists of disaccharide (GlcNAc-GlcNAc).

The enzyme catalyses a ribonucleotidyl-ribonucleotide-RNA + H2O = a 3'-end 3'-phospho-ribonucleotide-RNA + a 5'-end dephospho-ribonucleoside-RNA + H(+). In terms of biological role, self-incompatibility (SI) is the inherited ability of a flowering plant to prevent self-fertilization by discriminating between self and non-self pollen during pollination. In many species, self-incompatibility is controlled by the single, multiallelic locus S. In Pyrus pyrifolia (Chinese pear), this protein is Ribonuclease S-7.